We begin with the raw amino-acid sequence, 339 residues long: Undecaprenyl-phosphate 4-deoxy-4-formamido-L-arabinose transferase (339 aa).

2 consecutive transmembrane segments (helical) span residues 235-255 and 269-289; these read LSLV…FLLV and LFVL…GMGL.

It belongs to the glycosyltransferase 2 family.

It is found in the cell inner membrane. It carries out the reaction UDP-4-deoxy-4-formamido-beta-L-arabinose + di-trans,octa-cis-undecaprenyl phosphate = 4-deoxy-4-formamido-alpha-L-arabinopyranosyl di-trans,octa-cis-undecaprenyl phosphate + UDP. It participates in glycolipid biosynthesis; 4-amino-4-deoxy-alpha-L-arabinose undecaprenyl phosphate biosynthesis; 4-amino-4-deoxy-alpha-L-arabinose undecaprenyl phosphate from UDP-4-deoxy-4-formamido-beta-L-arabinose and undecaprenyl phosphate: step 1/2. The protein operates within bacterial outer membrane biogenesis; lipopolysaccharide biosynthesis. In terms of biological role, catalyzes the transfer of 4-deoxy-4-formamido-L-arabinose from UDP to undecaprenyl phosphate. The modified arabinose is attached to lipid A and is required for resistance to polymyxin and cationic antimicrobial peptides. The sequence is that of Undecaprenyl-phosphate 4-deoxy-4-formamido-L-arabinose transferase from Pseudomonas paraeruginosa (strain DSM 24068 / PA7) (Pseudomonas aeruginosa (strain PA7)).